A 475-amino-acid polypeptide reads, in one-letter code: Glutamate--tRNA ligase 2 (475 aa).

The short motif at 9-19 is the 'HIGH' region element; it reads PSPTGFLHIGS. The short motif at 238-242 is the 'KMSKS' region element; the sequence is KLSKR. Lysine 241 contacts ATP.

This sequence belongs to the class-I aminoacyl-tRNA synthetase family. Glutamate--tRNA ligase type 1 subfamily. Monomer.

It is found in the cytoplasm. The catalysed reaction is tRNA(Glu) + L-glutamate + ATP = L-glutamyl-tRNA(Glu) + AMP + diphosphate. Its function is as follows. Catalyzes the attachment of glutamate to tRNA(Glu) in a two-step reaction: glutamate is first activated by ATP to form Glu-AMP and then transferred to the acceptor end of tRNA(Glu). The sequence is that of Glutamate--tRNA ligase 2 from Bartonella quintana (strain Toulouse) (Rochalimaea quintana).